A 417-amino-acid polypeptide reads, in one-letter code: NADH-quinone oxidoreductase subunit D 2 (417 aa).

The protein belongs to the complex I 49 kDa subunit family. NDH-1 is composed of 14 different subunits. Subunits NuoB, C, D, E, F, and G constitute the peripheral sector of the complex.

The protein resides in the cell membrane. It catalyses the reaction a quinone + NADH + 5 H(+)(in) = a quinol + NAD(+) + 4 H(+)(out). Functionally, NDH-1 shuttles electrons from NADH, via FMN and iron-sulfur (Fe-S) centers, to quinones in the respiratory chain. The immediate electron acceptor for the enzyme in this species is believed to be ubiquinone. Couples the redox reaction to proton translocation (for every two electrons transferred, four hydrogen ions are translocated across the cytoplasmic membrane), and thus conserves the redox energy in a proton gradient. This Roseiflexus sp. (strain RS-1) protein is NADH-quinone oxidoreductase subunit D 2.